We begin with the raw amino-acid sequence, 158 residues long: Small ribosomal subunit protein uS9 (158 aa).

Residues M1–A20 form a disordered region. The span at V10–A20 shows a compositional bias: low complexity.

The protein belongs to the universal ribosomal protein uS9 family.

The polypeptide is Small ribosomal subunit protein uS9 (Mycobacterium sp. (strain JLS)).